The following is a 993-amino-acid chain: MAGARPPPGLLPLLAPLLLPLLLPAGCWALEETLMDTKWVTSELAWTSHPESGWEEVSGYDEAMNPIRTYQVCNVRESSQNNWLRTGFIWRREVQRVYVELKFTVRDCNSIPNIPGSCKETFNLFYYEADSDVASASSPFWMENPYVKVDTIAPDESFSRLDAGRVNTKVRSFGPLSKAGFYLAFQDQGACMSLISVRAFYKKCASTTAGFALFPETLTGAEPTSLVIAPGTCIANAVEVSVPLKLYCNGDGEWMVPVGACTCATGHEPAAKESQCRACPPGSYKAKQGEGPCLPCPPNSRTTSPAASICTCHNNFYRADSDSADSACTTVPSPPRGVISNVNETSLILEWSEPRDLGGRDDLLYNVICKKCRGSSGAGGPATCSRCDDNVEFVPRQLGLTERRVHISHLLAHTRYTFEVQAVNGVSGKSPLPPRYAAVNITTNQAAPSEVPTLHLHSSSGSSLTLSWAPPERPNGVILDYEMKYFEKSKGIASTVTSQKNSVQLDGLQPDARYVVQVRARTVAGYGQYSHPAEFETTSERGSGAQQLQEQLPLIVGSTVAGFVFMVVVVVIALVCLRKQRHGPDAEYTEKLQQYIAPGMKVYIDPFTYEDPNEAVREFAKEIDVSCVKIEEVIGAGEFGEVCRGRLKLPGRREVFVAIKTLKVGYTERQRRDFLSEASIMGQFDHPNIIRLEGVVTKSRPVMILTEFMENCALDSFLRLNDGQFTVIQLVGMLRGIAAGMKYLSEMNYVHRDLAARNILVNSNLVCKVSDFGLSRFLEDDPSDPTYTSSLGGKIPIRWTAPEAIAYRKFTSASDVWSYGIVMWEVMSYGERPYWDMSNQDVINAVEQDYRLPPPMDCPTALHQLMLDCWVRDRNLRPKFSQIVNTLDKLIRNAASLKVTASAPSGMSQPLLDRTVPDYTTFTTVGDWLDAIKMGRYKESFVGAGFASFDLVAQMTAEDLLRIGVTLAGHQKKILCSIQDMRLQMNQTLPVQV.

An N-terminal signal peptide occupies residues 1–29 (MAGARPPPGLLPLLAPLLLPLLLPAGCWA). The Extracellular segment spans residues 30–554 (LEETLMDTKW…AQQLQEQLPL (525 aa)). The region spanning 31-209 (EETLMDTKWV…FYKKCASTTA (179 aa)) is the Eph LBD domain. Residues C73 and C191 are joined by a disulfide bond. Fibronectin type-III domains are found at residues 331-446 (VPSP…TNQA) and 447-540 (APSE…TTSE). N-linked (GlcNAc...) asparagine glycans are attached at residues N343 and N440. The helical transmembrane segment at 555–575 (IVGSTVAGFVFMVVVVVIALV) threads the bilayer. Topologically, residues 576 to 993 (CLRKQRHGPD…QMNQTLPVQV (418 aa)) are cytoplasmic. Y609 carries the post-translational modification Phosphotyrosine; by autocatalysis. A Protein kinase domain is found at 628 to 891 (VKIEEVIGAG…QIVNTLDKLI (264 aa)). ATP-binding positions include 634-642 (IGAGEFGEV) and K660. The active-site Proton acceptor is D753. Residues 920–984 (TTFTTVGDWL…LCSIQDMRLQ (65 aa)) form the SAM domain. The PDZ-binding motif lies at 991 to 993 (VQV).

Belongs to the protein kinase superfamily. Tyr protein kinase family. Ephrin receptor subfamily. Heterotetramer upon binding of the ligand. The heterotetramer is composed of an ephrin dimer and a receptor dimer. Oligomerization is probably required to induce biological responses. Phosphorylated. Autophosphorylates upon ligand-binding. Autophosphorylation on Tyr-609 is required for interaction with SH2 domain-containing proteins. Post-translationally, ubiquitinated by RNF186, mainly through 'Lys-48' and 'Lys-63'-linked polyubiquitin chains. As to expression, expressed in cells of the retinal ganglion cell layer during retinal axon guidance to the optic disk. Expressed by Paneth and progenitor cells in the crypts of the intestinal epithelium (at protein level). Expressed in myogenic progenitor cells.

It is found in the cell membrane. The protein resides in the cell projection. It localises to the dendrite. It catalyses the reaction L-tyrosyl-[protein] + ATP = O-phospho-L-tyrosyl-[protein] + ADP + H(+). Receptor tyrosine kinase which binds promiscuously transmembrane ephrin-B family ligands residing on adjacent cells, leading to contact-dependent bidirectional signaling into neighboring cells. The signaling pathway downstream of the receptor is referred to as forward signaling while the signaling pathway downstream of the ephrin ligand is referred to as reverse signaling. Generally has an overlapping and redundant function with EPHB2. Like EPHB2, functions in axon guidance during development regulating for instance the neurons forming the corpus callosum and the anterior commissure, 2 major interhemispheric connections between the temporal lobes of the cerebral cortex. In addition to its role in axon guidance also plays an important redundant role with other ephrin-B receptors in development and maturation of dendritic spines and the formation of excitatory synapses. Controls other aspects of development through regulation of cell migration and positioning. This includes angiogenesis, palate development and thymic epithelium development for instance. Forward and reverse signaling through the EFNB2/EPHB3 complex also regulate migration and adhesion of cells that tubularize the urethra and septate the cloaca. Finally, plays an important role in intestinal epithelium differentiation segregating progenitor from differentiated cells in the crypt. In Mus musculus (Mouse), this protein is Ephrin type-B receptor 3 (Ephb3).